Consider the following 467-residue polypeptide: Inactive pancreatic lipase-related protein 1 (467 aa).

Residues 1-17 form the signal peptide; it reads MLIFWTITLFLLGAAKG. Disulfide bonds link cysteine 21-cysteine 27 and cysteine 109-cysteine 120. Residue serine 171 is the Nucleophile of the active site. The active-site Charge relay system is aspartate 194. 4 residues coordinate Ca(2+): glutamate 205, arginine 208, aspartate 210, and aspartate 213. Cysteine 255 and cysteine 279 are disulfide-bonded. The active-site Charge relay system is histidine 281. 3 cysteine pairs are disulfide-bonded: cysteine 303–cysteine 314, cysteine 317–cysteine 322, and cysteine 451–cysteine 467. One can recognise a PLAT domain in the interval 356 to 467; it reads WRYGVSITLS…EDTLLTLTPC (112 aa).

The protein belongs to the AB hydrolase superfamily. Lipase family. In terms of tissue distribution, pancreas.

It localises to the secreted. May function as inhibitor of dietary triglyceride digestion. Lacks detectable lipase activity towards triglycerides, diglycerides, phosphatidylcholine, galactolipids or cholesterol esters (in vitro). The polypeptide is Inactive pancreatic lipase-related protein 1 (PNLIPRP1) (Homo sapiens (Human)).